The primary structure comprises 533 residues: Chromosomal replication initiator protein DnaA (533 aa).

The tract at residues 1 to 72 (MNDFWQHCSA…DLARDFWNAP (72 aa)) is domain I, interacts with DnaA modulators. The interval 72-196 (PIEVQFVLDP…EAADSMYERS (125 aa)) is domain II. Positions 83 to 113 (AGQRSPAGATPLAPRAPLPSANPAPVAPGPA) are disordered. Residues 96–110 (PRAPLPSANPAPVAP) are compositionally biased toward pro residues. The tract at residues 197–413 (KLNPVLTFDN…GALRKILAYS (217 aa)) is domain III, AAA+ region. Positions 241, 243, 244, and 245 each coordinate ATP. Residues 414-533 (KFHGREITIE…LHVLEQTLKG (120 aa)) form a domain IV, binds dsDNA region.

This sequence belongs to the DnaA family. As to quaternary structure, oligomerizes as a right-handed, spiral filament on DNA at oriC.

The protein localises to the cytoplasm. Its function is as follows. Plays an essential role in the initiation and regulation of chromosomal replication. ATP-DnaA binds to the origin of replication (oriC) to initiate formation of the DNA replication initiation complex once per cell cycle. Binds the DnaA box (a 9 base pair repeat at the origin) and separates the double-stranded (ds)DNA. Forms a right-handed helical filament on oriC DNA; dsDNA binds to the exterior of the filament while single-stranded (ss)DNA is stabiized in the filament's interior. The ATP-DnaA-oriC complex binds and stabilizes one strand of the AT-rich DNA unwinding element (DUE), permitting loading of DNA polymerase. After initiation quickly degrades to an ADP-DnaA complex that is not apt for DNA replication. Binds acidic phospholipids. This Burkholderia mallei (strain SAVP1) protein is Chromosomal replication initiator protein DnaA.